Consider the following 674-residue polypeptide: tRNA 5-methylaminomethyl-2-thiouridine biosynthesis bifunctional protein MnmC (674 aa).

Positions 1 to 248 (MAASSLPSHN…KREMCFGRYA (248 aa)) are tRNA (mnm(5)s(2)U34)-methyltransferase. The tract at residues 276–674 (IGAGLAGATV…AIRHWRSGKR (399 aa)) is FAD-dependent cmnm(5)s(2)U34 oxidoreductase.

In the N-terminal section; belongs to the methyltransferase superfamily. tRNA (mnm(5)s(2)U34)-methyltransferase family. The protein in the C-terminal section; belongs to the DAO family. It depends on FAD as a cofactor.

It localises to the cytoplasm. It catalyses the reaction 5-aminomethyl-2-thiouridine(34) in tRNA + S-adenosyl-L-methionine = 5-methylaminomethyl-2-thiouridine(34) in tRNA + S-adenosyl-L-homocysteine + H(+). Catalyzes the last two steps in the biosynthesis of 5-methylaminomethyl-2-thiouridine (mnm(5)s(2)U) at the wobble position (U34) in tRNA. Catalyzes the FAD-dependent demodification of cmnm(5)s(2)U34 to nm(5)s(2)U34, followed by the transfer of a methyl group from S-adenosyl-L-methionine to nm(5)s(2)U34, to form mnm(5)s(2)U34. The sequence is that of tRNA 5-methylaminomethyl-2-thiouridine biosynthesis bifunctional protein MnmC from Hydrogenovibrio crunogenus (strain DSM 25203 / XCL-2) (Thiomicrospira crunogena).